Consider the following 295-residue polypeptide: Pyridoxal 5'-phosphate synthase subunit PdxS (295 aa).

D25 provides a ligand contact to D-ribose 5-phosphate. Residue K82 is the Schiff-base intermediate with D-ribose 5-phosphate of the active site. G154 contacts D-ribose 5-phosphate. R166 is a binding site for D-glyceraldehyde 3-phosphate. D-ribose 5-phosphate contacts are provided by residues G215 and 236-237 (GS).

It belongs to the PdxS/SNZ family. In terms of assembly, in the presence of PdxT, forms a dodecamer of heterodimers.

The enzyme catalyses aldehydo-D-ribose 5-phosphate + D-glyceraldehyde 3-phosphate + L-glutamine = pyridoxal 5'-phosphate + L-glutamate + phosphate + 3 H2O + H(+). It functions in the pathway cofactor biosynthesis; pyridoxal 5'-phosphate biosynthesis. Its function is as follows. Catalyzes the formation of pyridoxal 5'-phosphate from ribose 5-phosphate (RBP), glyceraldehyde 3-phosphate (G3P) and ammonia. The ammonia is provided by the PdxT subunit. Can also use ribulose 5-phosphate and dihydroxyacetone phosphate as substrates, resulting from enzyme-catalyzed isomerization of RBP and G3P, respectively. This is Pyridoxal 5'-phosphate synthase subunit PdxS from Staphylococcus haemolyticus (strain JCSC1435).